A 78-amino-acid chain; its full sequence is Small ribosomal subunit protein bS16 (78 aa).

This sequence belongs to the bacterial ribosomal protein bS16 family.

The protein is Small ribosomal subunit protein bS16 of Maridesulfovibrio salexigens (strain ATCC 14822 / DSM 2638 / NCIMB 8403 / VKM B-1763) (Desulfovibrio salexigens).